The following is an 86-amino-acid chain: Omega-theraphotoxin-Hhn1f 3 (86 aa).

Residues 1 to 21 (MKSIVFVALFGLALLAVACSA) form the signal peptide. Residues 22–50 (SEDAHKELLKEVVRAMVVDKTDAVQAEER) constitute a propeptide that is removed on maturation. Disulfide bonds link Cys52–Cys66, Cys59–Cys71, and Cys65–Cys78.

Belongs to the neurotoxin 10 (Hwtx-1) family. 17 (Hntx-9) subfamily. In terms of tissue distribution, expressed by the venom gland.

Its subcellular location is the secreted. Functionally, ion channel inhibitor. The sequence is that of Omega-theraphotoxin-Hhn1f 3 from Cyriopagopus hainanus (Chinese bird spider).